The sequence spans 352 residues: Histidinol-phosphate aminotransferase (352 aa).

An N6-(pyridoxal phosphate)lysine modification is found at lysine 208.

This sequence belongs to the class-II pyridoxal-phosphate-dependent aminotransferase family. Histidinol-phosphate aminotransferase subfamily. As to quaternary structure, homodimer. The cofactor is pyridoxal 5'-phosphate.

It catalyses the reaction L-histidinol phosphate + 2-oxoglutarate = 3-(imidazol-4-yl)-2-oxopropyl phosphate + L-glutamate. It participates in amino-acid biosynthesis; L-histidine biosynthesis; L-histidine from 5-phospho-alpha-D-ribose 1-diphosphate: step 7/9. The protein is Histidinol-phosphate aminotransferase of Streptococcus sanguinis (strain SK36).